A 244-amino-acid chain; its full sequence is NAD(P)H-quinone oxidoreductase subunit K (244 aa).

[4Fe-4S] cluster contacts are provided by Cys-60, Cys-61, Cys-125, and Cys-156. Residues 213–244 are disordered; sequence TSANSIPSSKKEKITELPDNNEKAEIIDTLEN. Residues 221–238 show a composition bias toward basic and acidic residues; sequence SKKEKITELPDNNEKAEI.

Belongs to the complex I 20 kDa subunit family. NDH-1 can be composed of about 15 different subunits; different subcomplexes with different compositions have been identified which probably have different functions. Requires [4Fe-4S] cluster as cofactor.

The protein resides in the cellular thylakoid membrane. The catalysed reaction is a plastoquinone + NADH + (n+1) H(+)(in) = a plastoquinol + NAD(+) + n H(+)(out). It carries out the reaction a plastoquinone + NADPH + (n+1) H(+)(in) = a plastoquinol + NADP(+) + n H(+)(out). Functionally, NDH-1 shuttles electrons from an unknown electron donor, via FMN and iron-sulfur (Fe-S) centers, to quinones in the respiratory and/or the photosynthetic chain. The immediate electron acceptor for the enzyme in this species is believed to be plastoquinone. Couples the redox reaction to proton translocation, and thus conserves the redox energy in a proton gradient. Cyanobacterial NDH-1 also plays a role in inorganic carbon-concentration. In Prochlorococcus marinus (strain MIT 9301), this protein is NAD(P)H-quinone oxidoreductase subunit K.